The following is a 61-amino-acid chain: Small ribosomal subunit protein uS14 (61 aa).

Residues C24, C27, C40, and C43 each contribute to the Zn(2+) site.

The protein belongs to the universal ribosomal protein uS14 family. Zinc-binding uS14 subfamily. Part of the 30S ribosomal subunit. Contacts proteins S3 and S10. It depends on Zn(2+) as a cofactor.

Binds 16S rRNA, required for the assembly of 30S particles and may also be responsible for determining the conformation of the 16S rRNA at the A site. The sequence is that of Small ribosomal subunit protein uS14 from Mycobacterium leprae (strain Br4923).